We begin with the raw amino-acid sequence, 174 residues long: MLTISKLIPQGQGLAPVLLRRASTMELDWDVRQKSRFEATDSAGRQLGVFLPRGTVVRGGDVLVAEDGSLVKVDAAPQPVLRITPCSSHGTAFDLTRAAYHLGNRHVPIELKPDHLKIEPDHVLADMLRAMHLTVLAVNEPFEPENGAYATGGHAHDHDGEPEHVHGPGCQHAH.

The disordered stretch occupies residues 146–174 (NGAYATGGHAHDHDGEPEHVHGPGCQHAH). Positions 154–166 (HAHDHDGEPEHVH) are enriched in basic and acidic residues.

This sequence belongs to the UreE family.

It is found in the cytoplasm. Involved in urease metallocenter assembly. Binds nickel. Probably functions as a nickel donor during metallocenter assembly. The sequence is that of Urease accessory protein UreE from Albidiferax ferrireducens (strain ATCC BAA-621 / DSM 15236 / T118) (Rhodoferax ferrireducens).